The following is a 342-amino-acid chain: MQNPFVPQLVYIEPRALEYPLGQELQDKFENMGIEIRETTSHNQVRNIPGKNHLQQYRNAKSTLVIGVRKTLKFDSSKPSAEYAIPFATGCMGHCHYCYLQTTMGSKPYIRTYVNVEEILDQADKYMKERAPEFTRFEASCTSDIVGIDHLTHTLKRAIEHFGQSDLGKLRFVTKFHHVDHLLDAKHNGKTRFRFSINADYVIKNFEPGTSPLDKRIEAAVKVAKAGYPLGFIVAPIYIHEGWEEGYRHLFEKLDAALPQDVRHDITFELIQHRFTKPAKRVIEKNYPKTKLELDEEKRRYKWGRYGIGKYIYQKDEEHALREALESYIDTFFPNAKIEYFT.

The region spanning 77–305 (SKPSAEYAIP…EEKRRYKWGR (229 aa)) is the Radical SAM core domain. Residues Cys91, Cys95, and Cys98 each coordinate [4Fe-4S] cluster. Residues 218–235 (EAAVKVAKAGYPLGFIVA) constitute a DNA-binding region (H-T-H motif).

It belongs to the radical SAM superfamily. SPL family. As to quaternary structure, monomer or homodimer. [4Fe-4S] cluster is required as a cofactor. S-adenosyl-L-methionine serves as cofactor.

The catalysed reaction is (5R)-5,6-dihydro-5-(thymidin-7-yl)thymidine in DNA = a thymidine dimer in DNA. In terms of biological role, involved in repair of UV radiation-induced DNA damage during spore germination. Can repair thymine dimer 5-thyminyl-5,6-dihydrothymine (known as spore photoproduct (SP)) by in situ monomerization of SP to two thymines. In Bacillus subtilis (strain 168), this protein is Spore photoproduct lyase (splB).